We begin with the raw amino-acid sequence, 235 residues long: MKFGVLVFPGSNCDRDVVLVTRDLLKQPTRMVWHQETDISDLDVVVIPGGFSYGDYLRCGAISRFSPAMQATMAHAEQGKLVLGICNGFQVLTESGLLPGALVRNRDLHFICDRVPVRVERTNLPWTQAYQAGQVITLPIAHGEGCYYADPETLKQLQANQQILFRYCQPNGEITPDSNPNGSVENIAGICNRQGNVVGMMPHPERASDPTLGYTDGLLLFQGVLNSLMAQGVTA.

One can recognise a Glutamine amidotransferase type-1 domain in the interval 3–234 (FGVLVFPGSN…LNSLMAQGVT (232 aa)). Cys86 acts as the Nucleophile in catalysis. Residues His203 and Glu205 contribute to the active site.

Part of the FGAM synthase complex composed of 1 PurL, 1 PurQ and 2 PurS subunits.

It localises to the cytoplasm. The catalysed reaction is N(2)-formyl-N(1)-(5-phospho-beta-D-ribosyl)glycinamide + L-glutamine + ATP + H2O = 2-formamido-N(1)-(5-O-phospho-beta-D-ribosyl)acetamidine + L-glutamate + ADP + phosphate + H(+). The enzyme catalyses L-glutamine + H2O = L-glutamate + NH4(+). Its pathway is purine metabolism; IMP biosynthesis via de novo pathway; 5-amino-1-(5-phospho-D-ribosyl)imidazole from N(2)-formyl-N(1)-(5-phospho-D-ribosyl)glycinamide: step 1/2. Its function is as follows. Part of the phosphoribosylformylglycinamidine synthase complex involved in the purines biosynthetic pathway. Catalyzes the ATP-dependent conversion of formylglycinamide ribonucleotide (FGAR) and glutamine to yield formylglycinamidine ribonucleotide (FGAM) and glutamate. The FGAM synthase complex is composed of three subunits. PurQ produces an ammonia molecule by converting glutamine to glutamate. PurL transfers the ammonia molecule to FGAR to form FGAM in an ATP-dependent manner. PurS interacts with PurQ and PurL and is thought to assist in the transfer of the ammonia molecule from PurQ to PurL. The polypeptide is Phosphoribosylformylglycinamidine synthase subunit PurQ (Acaryochloris marina (strain MBIC 11017)).